Consider the following 46-residue polypeptide: Esculentin-1SEa (46 aa).

Cys40 and Cys46 are disulfide-bonded.

As to expression, expressed by the skin glands.

Its subcellular location is the secreted. Its function is as follows. Mast cell degranulating peptide. Causes histamine release from rat peritoneal mast cells in vitro. Has antibacterial activity against the Gram-negative bacterium E.coli K12 and Gram-positive bacterium M.luteus NCT C2665. The polypeptide is Esculentin-1SEa (Lithobates sevosus (Dusky gopher frog)).